Reading from the N-terminus, the 441-residue chain is Histidinol dehydrogenase (441 aa).

NAD(+) contacts are provided by Tyr136, Gln197, and Asn220. Residues Ser243, Gln265, and His268 each contribute to the substrate site. Residues Gln265 and His268 each coordinate Zn(2+). Residues Glu333 and His334 each act as proton acceptor in the active site. 4 residues coordinate substrate: His334, Asp367, Glu421, and His426. Asp367 contributes to the Zn(2+) binding site. A Zn(2+)-binding site is contributed by His426.

The protein belongs to the histidinol dehydrogenase family. Zn(2+) is required as a cofactor.

It carries out the reaction L-histidinol + 2 NAD(+) + H2O = L-histidine + 2 NADH + 3 H(+). It functions in the pathway amino-acid biosynthesis; L-histidine biosynthesis; L-histidine from 5-phospho-alpha-D-ribose 1-diphosphate: step 9/9. Its function is as follows. Catalyzes the sequential NAD-dependent oxidations of L-histidinol to L-histidinaldehyde and then to L-histidine. The chain is Histidinol dehydrogenase from Pseudomonas fluorescens (strain Pf0-1).